The following is a 352-amino-acid chain: DNA polymerase IV (352 aa).

One can recognise a UmuC domain in the interval 4–185 (IIHVDMDCFF…LPLSKIPGVG (182 aa)). Mg(2+) contacts are provided by Asp8 and Asp103. Residue Glu104 is part of the active site.

Belongs to the DNA polymerase type-Y family. As to quaternary structure, monomer. Mg(2+) serves as cofactor.

The protein localises to the cytoplasm. The enzyme catalyses DNA(n) + a 2'-deoxyribonucleoside 5'-triphosphate = DNA(n+1) + diphosphate. Poorly processive, error-prone DNA polymerase involved in untargeted mutagenesis. Copies undamaged DNA at stalled replication forks, which arise in vivo from mismatched or misaligned primer ends. These misaligned primers can be extended by PolIV. Exhibits no 3'-5' exonuclease (proofreading) activity. May be involved in translesional synthesis, in conjunction with the beta clamp from PolIII. The sequence is that of DNA polymerase IV from Yersinia pestis bv. Antiqua (strain Antiqua).